A 1249-amino-acid chain; its full sequence is DNA-directed RNA polymerase subunit beta (1249 aa).

It belongs to the RNA polymerase beta chain family. The RNAP catalytic core consists of 2 alpha, 1 beta, 1 beta' and 1 omega subunit. When a sigma factor is associated with the core the holoenzyme is formed, which can initiate transcription.

The enzyme catalyses RNA(n) + a ribonucleoside 5'-triphosphate = RNA(n+1) + diphosphate. Functionally, DNA-dependent RNA polymerase catalyzes the transcription of DNA into RNA using the four ribonucleoside triphosphates as substrates. The sequence is that of DNA-directed RNA polymerase subunit beta from Clostridium botulinum (strain Eklund 17B / Type B).